A 283-amino-acid polypeptide reads, in one-letter code: Thymidylate synthase (283 aa).

R22 contacts dUMP. The Nucleophile role is filled by C160. Residues 180-183, N191, and 221-223 each bind dUMP; these read RSCD and HIY. D183 contacts (6R)-5,10-methylene-5,6,7,8-tetrahydrofolate. (6R)-5,10-methylene-5,6,7,8-tetrahydrofolate is bound at residue S282.

The protein belongs to the thymidylate synthase family. Bacterial-type ThyA subfamily. As to quaternary structure, homodimer.

It is found in the cytoplasm. The enzyme catalyses dUMP + (6R)-5,10-methylene-5,6,7,8-tetrahydrofolate = 7,8-dihydrofolate + dTMP. It participates in pyrimidine metabolism; dTTP biosynthesis. In terms of biological role, catalyzes the reductive methylation of 2'-deoxyuridine-5'-monophosphate (dUMP) to 2'-deoxythymidine-5'-monophosphate (dTMP) while utilizing 5,10-methylenetetrahydrofolate (mTHF) as the methyl donor and reductant in the reaction, yielding dihydrofolate (DHF) as a by-product. This enzymatic reaction provides an intracellular de novo source of dTMP, an essential precursor for DNA biosynthesis. This is Thymidylate synthase from Haemophilus influenzae (strain PittGG).